Reading from the N-terminus, the 556-residue chain is 2-isopropylmalate synthase (556 aa).

One can recognise a Pyruvate carboxyltransferase domain in the interval 33-307; it reads PIWCSSDLRD…NPELDFSDID (275 aa). Mg(2+) is bound by residues aspartate 42, histidine 246, histidine 248, and asparagine 282. The tract at residues 439–556 is regulatory domain; sequence ANTPYALISH…SLSQAQAKAA (118 aa).

It belongs to the alpha-IPM synthase/homocitrate synthase family. LeuA type 2 subfamily. In terms of assembly, homodimer. Mg(2+) is required as a cofactor.

The protein localises to the cytoplasm. The enzyme catalyses 3-methyl-2-oxobutanoate + acetyl-CoA + H2O = (2S)-2-isopropylmalate + CoA + H(+). The protein operates within amino-acid biosynthesis; L-leucine biosynthesis; L-leucine from 3-methyl-2-oxobutanoate: step 1/4. In terms of biological role, catalyzes the condensation of the acetyl group of acetyl-CoA with 3-methyl-2-oxobutanoate (2-ketoisovalerate) to form 3-carboxy-3-hydroxy-4-methylpentanoate (2-isopropylmalate). The polypeptide is 2-isopropylmalate synthase (Pseudomonas syringae pv. tomato (strain ATCC BAA-871 / DC3000)).